Reading from the N-terminus, the 1591-residue chain is GATOR1 complex protein DEPDC5 (1591 aa).

Disordered stretches follow at residues 427 to 455, 478 to 532, and 695 to 720; these read GKKS…TLPI, LATC…STNI, and LSNS…STSP. Over residues 430 to 439 the composition is skewed to basic and acidic residues; it reads SASEKTKNGR. Over residues 494-508 the composition is skewed to low complexity; sequence SASSCDVSSSPSLPS. At Ser-505 the chain carries Phosphoserine. A compositionally biased stretch (polar residues) spans 518–532; it reads SQASDDSSLGKSTNI. Ser-992 carries the post-translational modification Phosphoserine. Disordered regions lie at residues 1040–1064 and 1118–1153; these read SQKS…ENSS and STGQ…SSQQ. The span at 1118-1149 shows a compositional bias: polar residues; that stretch reads STGQPMDRGNNQTFGNSQNIEQAFPSANSGDY. The 76-residue stretch at 1175 to 1250 folds into the DEP domain; sequence PSTGVQLLSE…YGFYFYKIVM (76 aa). Phosphoserine is present on Ser-1518.

This sequence belongs to the IML1 family. As to quaternary structure, within the GATOR complex, component of the GATOR1 subcomplex, made of DEPDC5, NPRL2 and NPRL3. GATOR1 mediates the strong interaction of the GATOR complex with small GTPases Rag (RagA/RRAGA, RagB/RRAGB, RagC/RRAGC and/or RagD/RRAGD) heterodimers. GATOR1 interacts with GPR155/LYCHOS; interaction takes place in presence of cholesterol and prevents interaction between GATOR1 and KICSTOR. Interacts with SAMTOR; interaction is direct and takes place in presence of methionine, leading to inhibit the activity of the GATOR1 complex. Post-translationally, phosphorylation at Ser-992 and Ser-1518 by AKT1 and PIM1 inhibit the activity of DEPDC5, releasing inhibition of the mTORC1 pathway. In terms of processing, ubiquitinated. Amino acid-induced 'Lys-48'-linked polyubiquitination of DEPDC5 by the BCR(KLHL22) ubiquitin ligase complex leads to DEPDC5 proteasomal degradation and inhibition of the GATOR1 complex. Ubiquitination may occur at multiple lysines. Expressed at low levels in all brain regions. Expressed throughout brain development, including in midgestation embryonic head (11.5 dpc), neonatal brain and whole adult brain. Present in neurons and absent in non-neuronal cells, including astrocytes (at protein level).

It is found in the lysosome membrane. The protein localises to the cytoplasm. Its subcellular location is the cytosol. It localises to the perinuclear region. Functionally, as a component of the GATOR1 complex functions as an inhibitor of the amino acid-sensing branch of the mTORC1 pathway. In response to amino acid depletion, the GATOR1 complex has GTPase activating protein (GAP) activity and strongly increases GTP hydrolysis by RagA/RRAGA (or RagB/RRAGB) within heterodimeric Rag complexes, thereby turning them into their inactive GDP-bound form, releasing mTORC1 from lysosomal surface and inhibiting mTORC1 signaling. In the presence of abundant amino acids, the GATOR1 complex is negatively regulated by GATOR2, the other GATOR subcomplex, in this amino acid-sensing branch of the TORC1 pathway. Within the GATOR1 complex, DEPDC5 mediates direct interaction with the nucleotide-binding pocket of small GTPases Rag (RagA/RRAGA, RagB/RRAGB, RagC/RRAGC and/or RagD/RRAGD) and coordinates their nucleotide loading states by promoting RagA/RRAGA or RagB/RRAGB into their GDP-binding state and RagC/RRAGC or RagD/RRAGD into their GTP-binding state. However, it does not execute the GAP activity, which is mediated by NPRL2. This is GATOR1 complex protein DEPDC5 from Mus musculus (Mouse).